Consider the following 384-residue polypeptide: GDP/UDP-N,N'-diacetylbacillosamine 2-epimerase (hydrolyzing) (384 aa).

This sequence belongs to the UDP-N-acetylglucosamine 2-epimerase family.

The catalysed reaction is GDP-N,N'-diacetylbacillosamine + H2O = 2,4-diacetamido-2,4,6-trideoxy-alpha-D-mannopyranose + GDP + H(+). The enzyme catalyses UDP-N,N'-diacetylbacillosamine + H2O = 2,4-diacetamido-2,4,6-trideoxy-alpha-D-mannopyranose + UDP + H(+). Its function is as follows. Involved in biosynthesis of legionaminic acid (5,7-diamino-3,5,7,9-tetradeoxy-D-glycero-D-galacto-non-2-ulosonic acid)(Leg), a sialic acid-like derivative that is incorporated into flagellin via O-linkage to Ser/Thr. Catalyzes the conversion of GDP-N,N'-diacetylbacillosamine (Bac2Ac4Ac) into 2,4-diacetamido-2,4,6-trideoxymannose and GDP. It can also use UDP-N,N'-diacetylbacillosamine however it generates small quantities of 2,4-diacetamido-2,4,6-trideoxymannose. The sequence is that of GDP/UDP-N,N'-diacetylbacillosamine 2-epimerase (hydrolyzing) (legG) from Campylobacter jejuni subsp. jejuni serotype O:2 (strain ATCC 700819 / NCTC 11168).